A 245-amino-acid chain; its full sequence is 1-(5-phosphoribosyl)-5-[(5-phosphoribosylamino)methylideneamino] imidazole-4-carboxamide isomerase (245 aa).

The Proton acceptor role is filled by D7. Residue D129 is the Proton donor of the active site.

The protein belongs to the HisA/HisF family.

It is found in the cytoplasm. It carries out the reaction 1-(5-phospho-beta-D-ribosyl)-5-[(5-phospho-beta-D-ribosylamino)methylideneamino]imidazole-4-carboxamide = 5-[(5-phospho-1-deoxy-D-ribulos-1-ylimino)methylamino]-1-(5-phospho-beta-D-ribosyl)imidazole-4-carboxamide. It participates in amino-acid biosynthesis; L-histidine biosynthesis; L-histidine from 5-phospho-alpha-D-ribose 1-diphosphate: step 4/9. This Aliivibrio fischeri (strain MJ11) (Vibrio fischeri) protein is 1-(5-phosphoribosyl)-5-[(5-phosphoribosylamino)methylideneamino] imidazole-4-carboxamide isomerase.